The following is a 53-amino-acid chain: Temporin-SHd (53 aa).

A signal peptide spans 1 to 10 (FLGTINLSLC). The propeptide occupies 11–34 (EQERDADEEKRDEPDESDVEVEKR). Phe-51 carries the phenylalanine amide modification.

Its subcellular location is the secreted. The protein resides in the target cell membrane. Functionally, non-amphipathic mildly cationic alpha-helical antimicrobial peptide with potent activity against Gram-positive (including methicillin-resistant Staphylococcus aureus (MRSA)) and Gram-negative bacteria, and some fungi, as well as against Trypanosoma and Leishmania (both promastigote and amastigote forms). Strongly and selectively perturbs anionic bilayer membranes by interacting with the polar head groups and acyl region of the phospholipids, with formation of regions of two coexisting phases, one phase rich in peptide and the other lipid-rich. Shows low hemolytic activity (LC(50)=44 uM) and a low toxicity for human monocytes THP-1 and THP-1-derived macrophages. Is not toxic to human hepatoma-derived cells. The polypeptide is Temporin-SHd (Pelophylax saharicus (Sahara frog)).